Reading from the N-terminus, the 220-residue chain is Small ribosomal subunit protein eS1 (220 aa).

Belongs to the eukaryotic ribosomal protein eS1 family.

The protein is Small ribosomal subunit protein eS1 of Methanococcus vannielii (strain ATCC 35089 / DSM 1224 / JCM 13029 / OCM 148 / SB).